A 137-amino-acid chain; its full sequence is uncharacterized protein (137 aa).

4 consecutive transmembrane segments (helical) span residues 14-34 (AVVV…GSIS), 48-68 (YHII…SLSI), 84-104 (FFTI…LGLT), and 109-129 (HIPS…LNLF).

The protein resides in the cell membrane. This is an uncharacterized protein from Methanocaldococcus jannaschii (strain ATCC 43067 / DSM 2661 / JAL-1 / JCM 10045 / NBRC 100440) (Methanococcus jannaschii).